The primary structure comprises 247 residues: Mannose-specific lectin CML-2 (247 aa).

A carbohydrate contacts are provided by D87 and G107. N-linked (GlcNAc...) asparagine glycosylation occurs at N119. Residues E129 and D131 each coordinate Mn(2+). Ca(2+)-binding residues include D131 and F133. Residues S138 and N139 each coordinate a carbohydrate. The Ca(2+) site is built by N139 and D142. D142 and H147 together coordinate Mn(2+). A carbohydrate-binding residues include G221, E222, and Q223.

Belongs to the leguminous lectin family. As to quaternary structure, homodimer; non-covalently linked. Post-translationally, glycosylated.

Functionally, mannose-specific lectin. Also binds alpha-methyl-D-mannoside, D-glucose, N-acetyl-D-glucosamine and sucrose but not D-galactose, D-arabinose, D-fructose, D-xylose, lactose or glycoproteins fetiun, PSM and ovalbumin. Shows agglutinating activity towards rabbit erythrocytes. The sequence is that of Mannose-specific lectin CML-2 from Centrolobium microchaete (Canarywood tree).